Here is a 151-residue protein sequence, read N- to C-terminus: Probable ribonuclease P/MRP protein subunit POP5 (151 aa).

This sequence belongs to the eukaryotic/archaeal RNase P protein component 2 family. Component of nuclear RNase P and RNase MRP ribonucleoproteins. Interacts with GAF1/RPP30.

Its subcellular location is the nucleus. The protein localises to the nucleolus. In terms of biological role, essential protein required during embryogenesis. Component of ribonuclease P, a protein complex that generates mature tRNA molecules by cleaving their 5'-ends. Also a component of RNase MRP. The polypeptide is Probable ribonuclease P/MRP protein subunit POP5 (EMB1687) (Arabidopsis thaliana (Mouse-ear cress)).